A 231-amino-acid polypeptide reads, in one-letter code: L-ribulose-5-phosphate 4-epimerase (231 aa).

Substrate is bound by residues 27–28, 44–45, and 73–74; these read GN, SG, and SS. The Zn(2+) site is built by Asp-75, His-94, and His-96. Asp-119 acts as the Proton donor/acceptor in catalysis. Position 168 (His-168) interacts with Zn(2+). The Proton donor/acceptor role is filled by Tyr-226.

This sequence belongs to the aldolase class II family. AraD/FucA subfamily. Zn(2+) is required as a cofactor.

It catalyses the reaction L-ribulose 5-phosphate = D-xylulose 5-phosphate. Its pathway is carbohydrate degradation; L-arabinose degradation via L-ribulose; D-xylulose 5-phosphate from L-arabinose (bacterial route): step 3/3. Involved in the degradation of L-arabinose. Catalyzes the interconversion of L-ribulose 5-phosphate (LRu5P) and D-xylulose 5-phosphate (D-Xu5P) via a retroaldol/aldol mechanism (carbon-carbon bond cleavage analogous to a class II aldolase reaction). This chain is L-ribulose-5-phosphate 4-epimerase (araD), found in Halalkalibacterium halodurans (strain ATCC BAA-125 / DSM 18197 / FERM 7344 / JCM 9153 / C-125) (Bacillus halodurans).